The sequence spans 461 residues: Ribitol-5-phosphate transferase FKTN (461 aa).

The Cytoplasmic segment spans residues 1 to 7 (MSRINKN). Residues 6-27 (KNVVLALLTLTSSAFLLFQLYY) form a required and sufficient for interaction with POMGNT1 region. Residues 8 to 28 (VVLALLTLTSSAFLLFQLYYY) traverse the membrane as a helical; Signal-anchor for type II membrane protein segment. Topologically, residues 29–461 (KHYLSTRNGA…SEWDEVIQLY (433 aa)) are lumenal. N-linked (GlcNAc...) asparagine glycosylation is present at Asn92.

It belongs to the LicD transferase family. As to quaternary structure, forms a complex composed of FKTN/fukutin, FKRP and RXYLT1/TMEM5. Interacts (via transmembrane domain) with POMGNT1; the interaction is direct and is required for normal POMGNT1 location in Golgi membranes. As to expression, expressed in the retina (at protein level).

The protein resides in the golgi apparatus membrane. It localises to the cytoplasm. Its subcellular location is the nucleus. The catalysed reaction is 3-O-[beta-D-GalNAc-(1-&gt;3)-beta-D-GlcNAc-(1-&gt;4)-(O-6-P-alpha-D-Man)]-Thr-[protein] + CDP-L-ribitol = 3-O-[Rib-ol-P-3-beta-D-GalNAc-(1-&gt;3)-beta-D-GlcNAc-(1-&gt;4)-(O-6-P-alpha-D-Man)]-Thr-[protein] + CMP + H(+). The protein operates within protein modification; protein glycosylation. In terms of biological role, catalyzes the transfer of CDP-ribitol to the distal N-acetylgalactosamine of the phosphorylated O-mannosyl trisaccharide (N-acetylgalactosamine-beta-3-N-acetylglucosamine-beta-4-(phosphate-6-)mannose), a carbohydrate structure present in alpha-dystroglycan (DAG1). This constitutes the first step in the formation of the ribitol 5-phosphate tandem repeat which links the phosphorylated O-mannosyl trisaccharide to the ligand binding moiety composed of repeats of 3-xylosyl-alpha-1,3-glucuronic acid-beta-1. May interact with and reinforce a large complex encompassing the outside and inside of muscle membranes. Could be involved in brain development. This Macaca fascicularis (Crab-eating macaque) protein is Ribitol-5-phosphate transferase FKTN.